Reading from the N-terminus, the 393-residue chain is S-adenosylmethionine synthase (393 aa).

Residue His-16 coordinates ATP. Mg(2+) is bound at residue Asp-18. Glu-44 contacts K(+). Glu-57 and Gln-100 together coordinate L-methionine. Residues 100-110 (QSNDIAQGVDH) are flexible loop. Residues 167–169 (DAK), 238–239 (RF), Asp-247, 253–254 (RK), Ala-270, and Lys-274 each bind ATP. Residue Asp-247 coordinates L-methionine. Lys-278 contacts L-methionine.

It belongs to the AdoMet synthase family. As to quaternary structure, homotetramer; dimer of dimers. Mg(2+) is required as a cofactor. K(+) serves as cofactor.

Its subcellular location is the cytoplasm. The catalysed reaction is L-methionine + ATP + H2O = S-adenosyl-L-methionine + phosphate + diphosphate. It participates in amino-acid biosynthesis; S-adenosyl-L-methionine biosynthesis; S-adenosyl-L-methionine from L-methionine: step 1/1. Catalyzes the formation of S-adenosylmethionine (AdoMet) from methionine and ATP. The overall synthetic reaction is composed of two sequential steps, AdoMet formation and the subsequent tripolyphosphate hydrolysis which occurs prior to release of AdoMet from the enzyme. The chain is S-adenosylmethionine synthase from Variovorax paradoxus (strain S110).